A 38-amino-acid polypeptide reads, in one-letter code: Large ribosomal subunit protein bL36 (38 aa).

It belongs to the bacterial ribosomal protein bL36 family.

This is Large ribosomal subunit protein bL36 from Buchnera aphidicola subsp. Cinara cedri (strain Cc).